The primary structure comprises 198 residues: Na(+)-translocating NADH-quinone reductase subunit E (198 aa).

Transmembrane regions (helical) follow at residues S11 to V31, M39 to I59, F77 to A97, G110 to V130, V140 to I160, and L176 to I196.

The protein belongs to the NqrDE/RnfAE family. As to quaternary structure, composed of six subunits; NqrA, NqrB, NqrC, NqrD, NqrE and NqrF.

It is found in the cell inner membrane. It carries out the reaction a ubiquinone + n Na(+)(in) + NADH + H(+) = a ubiquinol + n Na(+)(out) + NAD(+). NQR complex catalyzes the reduction of ubiquinone-1 to ubiquinol by two successive reactions, coupled with the transport of Na(+) ions from the cytoplasm to the periplasm. NqrA to NqrE are probably involved in the second step, the conversion of ubisemiquinone to ubiquinol. This is Na(+)-translocating NADH-quinone reductase subunit E from Aeromonas hydrophila subsp. hydrophila (strain ATCC 7966 / DSM 30187 / BCRC 13018 / CCUG 14551 / JCM 1027 / KCTC 2358 / NCIMB 9240 / NCTC 8049).